The chain runs to 269 residues: Tryptophan synthase alpha chain (269 aa).

Residues E49 and D60 each act as proton acceptor in the active site.

It belongs to the TrpA family. Tetramer of two alpha and two beta chains.

It carries out the reaction (1S,2R)-1-C-(indol-3-yl)glycerol 3-phosphate + L-serine = D-glyceraldehyde 3-phosphate + L-tryptophan + H2O. Its pathway is amino-acid biosynthesis; L-tryptophan biosynthesis; L-tryptophan from chorismate: step 5/5. The alpha subunit is responsible for the aldol cleavage of indoleglycerol phosphate to indole and glyceraldehyde 3-phosphate. In Photobacterium profundum (strain SS9), this protein is Tryptophan synthase alpha chain.